The sequence spans 363 residues: Methylthioribose-1-phosphate isomerase (363 aa).

Catalysis depends on aspartate 253, which acts as the Proton donor.

This sequence belongs to the eIF-2B alpha/beta/delta subunits family. MtnA subfamily.

The protein resides in the cytoplasm. The protein localises to the nucleus. The catalysed reaction is 5-(methylsulfanyl)-alpha-D-ribose 1-phosphate = 5-(methylsulfanyl)-D-ribulose 1-phosphate. Its pathway is amino-acid biosynthesis; L-methionine biosynthesis via salvage pathway; L-methionine from S-methyl-5-thio-alpha-D-ribose 1-phosphate: step 1/6. Its function is as follows. Catalyzes the interconversion of methylthioribose-1-phosphate (MTR-1-P) into methylthioribulose-1-phosphate (MTRu-1-P). The polypeptide is Methylthioribose-1-phosphate isomerase (Drosophila grimshawi (Hawaiian fruit fly)).